The primary structure comprises 662 residues: Probable protein phosphatase 2C 4 (662 aa).

Ser153 is subject to Phosphoserine. The PPM-type phosphatase domain maps to 249–653 (DVSLENQNLQ…DDVSIVVISL (405 aa)). Residues Asp286, Gly287, Asp581, and Asp644 each coordinate Mn(2+).

This sequence belongs to the PP2C family. Mg(2+) is required as a cofactor. Mn(2+) serves as cofactor. In terms of tissue distribution, expressed in seedlings, roots, leaves, stems, young inflorescences, flowers and siliques.

The protein resides in the nucleus. The enzyme catalyses O-phospho-L-seryl-[protein] + H2O = L-seryl-[protein] + phosphate. It catalyses the reaction O-phospho-L-threonyl-[protein] + H2O = L-threonyl-[protein] + phosphate. Involved in leaf development regulation. This is Probable protein phosphatase 2C 4 (PLL5) from Arabidopsis thaliana (Mouse-ear cress).